The primary structure comprises 226 residues: Deoxyribose-phosphate aldolase (226 aa).

Asp-96 serves as the catalytic Proton donor/acceptor. Lys-157 functions as the Schiff-base intermediate with acetaldehyde in the catalytic mechanism. Lys-185 acts as the Proton donor/acceptor in catalysis.

The protein belongs to the DeoC/FbaB aldolase family. DeoC type 1 subfamily.

It is found in the cytoplasm. It carries out the reaction 2-deoxy-D-ribose 5-phosphate = D-glyceraldehyde 3-phosphate + acetaldehyde. It functions in the pathway carbohydrate degradation; 2-deoxy-D-ribose 1-phosphate degradation; D-glyceraldehyde 3-phosphate and acetaldehyde from 2-deoxy-alpha-D-ribose 1-phosphate: step 2/2. Catalyzes a reversible aldol reaction between acetaldehyde and D-glyceraldehyde 3-phosphate to generate 2-deoxy-D-ribose 5-phosphate. The sequence is that of Deoxyribose-phosphate aldolase from Trichormus variabilis (strain ATCC 29413 / PCC 7937) (Anabaena variabilis).